Reading from the N-terminus, the 451-residue chain is mRNA cleavage and polyadenylation factor CLP1 (451 aa).

Residues K75 and 136-141 (NTGKTA) each bind ATP.

Belongs to the Clp1 family. Clp1 subfamily. Component of a pre-mRNA cleavage factor complex. Interacts directly with PCF11.

The protein localises to the nucleus. In terms of biological role, required for endonucleolytic cleavage during polyadenylation-dependent pre-mRNA 3'-end formation. In Candida glabrata (strain ATCC 2001 / BCRC 20586 / JCM 3761 / NBRC 0622 / NRRL Y-65 / CBS 138) (Yeast), this protein is mRNA cleavage and polyadenylation factor CLP1.